Consider the following 396-residue polypeptide: Elongation factor Tu (396 aa).

A tr-type G domain is found at 10 to 205 (KSHANIGTIG…AVDEYIPTPE (196 aa)). The G1 stretch occupies residues 19–26 (GHVDHGKT). 19–26 (GHVDHGKT) contributes to the GTP binding site. T26 lines the Mg(2+) pocket. The tract at residues 61–65 (GITIS) is G2. A G3 region spans residues 82-85 (DCPG). Residues 82-86 (DCPGH) and 137-140 (NKCD) contribute to the GTP site. The segment at 137–140 (NKCD) is G4. The interval 175–177 (SAL) is G5.

The protein belongs to the TRAFAC class translation factor GTPase superfamily. Classic translation factor GTPase family. EF-Tu/EF-1A subfamily. Monomer.

It localises to the cytoplasm. The catalysed reaction is GTP + H2O = GDP + phosphate + H(+). GTP hydrolase that promotes the GTP-dependent binding of aminoacyl-tRNA to the A-site of ribosomes during protein biosynthesis. This chain is Elongation factor Tu, found in Bacillus velezensis (strain DSM 23117 / BGSC 10A6 / LMG 26770 / FZB42) (Bacillus amyloliquefaciens subsp. plantarum).